The sequence spans 469 residues: Keratin, type I cytoskeletal 26 (469 aa).

Positions Met-1–Asn-82 are head. Residues Glu-83–Trp-118 are coil 1A. The 316-residue stretch at Glu-83–Ser-398 folds into the IF rod domain. Residues Tyr-119–Val-140 are linker 1. The interval Thr-141–Met-232 is coil 1B. A linker 12 region spans residues Gln-233–Leu-255. The segment at Leu-256 to Glu-394 is coil 2. Residues Gly-395–Ser-465 form a tail region. 2 disordered regions span residues Ser-398–Lys-421 and Lys-450–Gln-469. A compositionally biased stretch (basic and acidic residues) spans Ser-405 to Lys-421.

Belongs to the intermediate filament family. Heterotetramer of two type I and two type II keratins.

The protein is Keratin, type I cytoskeletal 26 of Bos taurus (Bovine).